We begin with the raw amino-acid sequence, 449 residues long: Xylose isomerase (449 aa).

Catalysis depends on residues histidine 101 and aspartate 104. 7 residues coordinate Mg(2+): glutamate 232, glutamate 268, histidine 271, aspartate 296, aspartate 307, aspartate 309, and aspartate 340.

The protein belongs to the xylose isomerase family. Homotetramer. The cofactor is Mg(2+).

Its subcellular location is the cytoplasm. The catalysed reaction is alpha-D-xylose = alpha-D-xylulofuranose. In Bifidobacterium longum (strain NCC 2705), this protein is Xylose isomerase.